A 200-amino-acid chain; its full sequence is Kunitz type trypsin inhibitor 111 (200 aa).

The N-terminal stretch at 1-24 (MSTISFTIFILANVWLLVVTTSIA) is a signal peptide. 3 cysteine pairs are disulfide-bonded: Cys62-Cys108, Cys160-Cys172, and Cys165-Cys168.

The protein belongs to the protease inhibitor I3 (leguminous Kunitz-type inhibitor) family. In terms of assembly, interacts with SCP1.

Its subcellular location is the secreted. It is found in the extracellular space. The protein localises to the apoplast. In Medicago truncatula (Barrel medic), this protein is Kunitz type trypsin inhibitor 111 (KPI111).